Reading from the N-terminus, the 305-residue chain is MKPSSSCNLLTILGPTASGKTRLAVSLARELSGEIISADSRQVFRRMDIGTGKDLHEYGAVPYHLIDVLEPGQECSVFTFQRLFLRAFQDISARGQLPILCGGTGLYLDAALRGYRMVEVPENPRLRTELANKSDTELAAILLHLVPDQHNRTDLADRNRTIRAIEIASYQPDEQEEQEPFPAIQPLVLGIRWDRAELRRRITQRLRQRLEAGMLDEIQQLHTGGVAWERLDYYGLEYRYGGLFLRGELNRNDLFQKLNAAIHDFAKRQETWFRRMERNGVTIHWLDGAGDPVAGARKVISGYFA.

An ATP-binding site is contributed by 14-21 (GPTASGKT). Residue 16–21 (TASGKT) coordinates substrate. An interaction with substrate tRNA region spans residues 39 to 42 (DSRQ).

It belongs to the IPP transferase family. In terms of assembly, monomer. Mg(2+) serves as cofactor.

It catalyses the reaction adenosine(37) in tRNA + dimethylallyl diphosphate = N(6)-dimethylallyladenosine(37) in tRNA + diphosphate. Its function is as follows. Catalyzes the transfer of a dimethylallyl group onto the adenine at position 37 in tRNAs that read codons beginning with uridine, leading to the formation of N6-(dimethylallyl)adenosine (i(6)A). This Trichlorobacter lovleyi (strain ATCC BAA-1151 / DSM 17278 / SZ) (Geobacter lovleyi) protein is tRNA dimethylallyltransferase 2.